A 340-amino-acid polypeptide reads, in one-letter code: Protein-arginine kinase (340 aa).

The Phosphagen kinase C-terminal domain occupies 21 to 242 (VVLSSRIRLA…EQIIMQERIA (222 aa)). ATP contacts are provided by residues 24 to 28 (SSRIR), His-79, Arg-113, 164 to 168 (RASVM), and 195 to 200 (RGIYGE).

The protein belongs to the ATP:guanido phosphotransferase family.

It carries out the reaction L-arginyl-[protein] + ATP = N(omega)-phospho-L-arginyl-[protein] + ADP + H(+). Functionally, catalyzes the specific phosphorylation of arginine residues in proteins. The polypeptide is Protein-arginine kinase (Listeria monocytogenes serotype 4a (strain HCC23)).